The chain runs to 892 residues: Chromodomain-helicase-DNA-binding protein 3 (892 aa).

Positions 1 to 20 are enriched in basic and acidic residues; the sequence is MSSKRGADPDWKTPGKASKD. The tract at residues 1 to 29 is disordered; it reads MSSKRGADPDWKTPGKASKDKRPKTNAKK. A PHD-type zinc finger spans residues 35–82; the sequence is EEYCKVCSDGGDLLCCDSCPSVYHRTCLSPPLKSIPKGDWICPRCIPL. Chromo domains follow at residues 84-156 and 179-240; these read GKAE…PSLE and LLVQ…GRQR. Residues 279–458 enclose the Helicase ATP-binding domain; that stretch reads RYSWGQGIPT…FHLLNFLSSG (180 aa). An ATP-binding site is contributed by 292 to 299; it reads DEMGLGKT. The DEAH box motif lies at 409-412; that stretch reads DEAH. Residues 590–739 form the Helicase C-terminal domain; the sequence is LLSKMLKQLK…LTHLVVRPGM (150 aa). Positions 839-892 are disordered; it reads SQPKLPKKQKKQSQQSQVDVESIMGKGKRIRKEIDYSNQYPSPNRATPSSIVLM. Over residues 874 to 892 the composition is skewed to polar residues; that stretch reads YSNQYPSPNRATPSSIVLM.

The protein belongs to the SNF2/RAD54 helicase family. Monomer.

Its subcellular location is the nucleus. The protein resides in the chromosome. It carries out the reaction ATP + H2O = ADP + phosphate + H(+). With respect to regulation, ATPase activity is stimulated by binding to DNA or nucleosomes, but is strongly activated by nucleosomes. In terms of biological role, ATP-dependent chromatin-remodeling factor which acts in nucleosome-remodeling by catalyzing ATP-dependent nucleosome mobilization. Likely to be involved in the regulation of transcription. The protein is Chromodomain-helicase-DNA-binding protein 3 of Drosophila melanogaster (Fruit fly).